Here is a 262-residue protein sequence, read N- to C-terminus: Small ribosomal subunit protein uS2 (262 aa).

This sequence belongs to the universal ribosomal protein uS2 family.

The protein is Small ribosomal subunit protein uS2 of Borrelia garinii subsp. bavariensis (strain ATCC BAA-2496 / DSM 23469 / PBi) (Borreliella bavariensis).